We begin with the raw amino-acid sequence, 1616 residues long: MRSIIIASIVALAIAFSPAFERTFEPKIDYHYKFDGLVLSGLPTASSELSQSRFSARVRIQAVDDRHIHLQLVNIHMAASHLPESEQIPSLNSMEQRELSEEYKQMLKLPLRAQLRNGLIAELQFDKEDAEWSKNMKRAVVNMISFNPIAPRNEIEKIESSYDKEEQSEENTSFFTNEKTLEGDCQVAYTVIREQKKTIITKSINFDKCTERSEIAYGLRYSSECPECEKDTVLIRPQTVYTYILENEELKESEVRSLYTVNVNGQEVMKTETRSKLVLEENHSIKSHIEKVNGEKESIIYSSRWEQLVEDFFKNGDKAEFAPFEKFPLDKKMHLIKTITEQIQEVENNIPETSHFLARLVRIFRTTSTSQLKEIHETLYVKADKKIQSLMEHALAIAGTKNTIQHILVHIENEDIVPLEAAQLLKSIQETPFPSQTIAEALIKFAESRVSKNNQVVRQSAWLAAGSVVRGIVDYKNIRPLVREDKRELKEKFLRVFMQQYKDAETTYEKILALKSIGNAGLDISVNQLNEIIVDKRQLLPVRKEAIDALRLLKDTMPRKIQKVLLPIYKNRQYEPEIRMLALWRMMHTRPEESLLVQVVSQMEKETNQQVAALTHQMIRHFAKSTNPCYQRVAIVCSKVLSFTRYQPQEQMIASSYAQLPLFLQNSFSGAQFDFAAIFEKNSFLLKDLHASLDAVFGGNWNKYFAQIGFSQQHMDKYVQMALEKLESIEKESTTVVRGRRIQTGITLLKELALKMNIRARPANYNEKDAFAMVYLRYKDMDYAILPVDTQLIEKLIEKYISNGKVQFSEIRRLLNQEHEFETHHAAYFYEAIRKFPTTLGLPLIVSGKIPTVFSAEGQFSLGLEETELRLTVEARPSVAATHVYEMRMFTPLFEQGVKSVQSVRAYTPIKIQAVVGMKRNFEIVYKVVVPENQKSIISLTTRPVVFLRFPGFSKFEYIEAEERTVVVPQWQQKTQEIEKVFNFLGLEVSTRGNILNQHTLENWLLAEQDFEVSVENKYRPAEFTARLTVGQLEKTELSQIKYNKIFEKEFELEQENTESRREYFTKMVKSIQKEQGYKSVVSLRLEAPRDYTMNTEVTTVCDKQVRMCQWEVEIRRSPILEETKEWTLRSQLLVVRPEMPSSLRQLHDQPHREVQLSLTSTWGSQKKSEVTVNAQLQQSKEQKKYERNMDRHFNGMPEYELLIKAARLNQINAVAEYKLTRETEQVLARYFDLVKAYNYWTVSSRPENNENDRVVVQLTVEPMSRQYVNITMQSPIERVELKNVQVPRVYLPSIAQRSVKHLLNEASGSVCKVQKNQIRTFDDVLYNTPLTTCYSLIAKDCSEEPTFAVLSKKTEKNSEEMIIKVIRGEQEIVAQLQNEEIRVKVDGKKILSEDYSAHQIERLGESDIVIELPEGEVRFDGYTIKTQLPSYSRKNQLCGLCGNNDDESTNEFYTSDNTETKDIEEFHRSYLLKNEECEAEEERLSEKKNYRKYDERKYESEEYSFEETYDYEQENTNKKQKNQRSQKKSDLVEKTQIKEFSHRICFSVEPVAECRRRGYEAVEQQQRKVRFTCLPRHSSEARRLVKEARQGTVQLDDHKISFVHSVQVPVACVAY.

Positions 1–19 are cleaved as a signal peptide; it reads MRSIIIASIVALAIAFSPA. Residues 24–689 form the Vitellogenin domain; that stretch reads FEPKIDYHYK…EKNSFLLKDL (666 aa). An N-linked (GlcNAc...) asparagine glycan is attached at Asn1270. The VWFD domain occupies 1310–1479; it reads SVCKVQKNQI…SYLLKNEECE (170 aa). Intrachain disulfides connect Cys1312/Cys1442 and Cys1334/Cys1478. Over residues 1505–1514 the composition is skewed to acidic residues; it reads SFEETYDYEQ. Residues 1505-1531 form a disordered region; it reads SFEETYDYEQENTNKKQKNQRSQKKSD.

As to expression, expressed in the intestine of adult hermaphrodites.

The protein localises to the secreted. In terms of biological role, precursor of the egg-yolk proteins that are sources of nutrients during embryonic development. Together with other vitellogenins, may play a role in modulating life-span, acting via induction of autophagy and lysosomal lipolysis. The polypeptide is Vitellogenin-1 (vit-1) (Caenorhabditis elegans).